Here is a 296-residue protein sequence, read N- to C-terminus: CDP-diacylglycerol--glycerol-3-phosphate 3-phosphatidyltransferase 1, chloroplastic/mitochondrial (296 aa).

The transit peptide at Met1–Arg39 directs the protein to the chloroplast and mitochondrion. Low complexity predominate over residues Phe62–Ser82. The disordered stretch occupies residues Phe62–Lys103. The next 5 helical transmembrane spans lie at Val104 to Ala124, Phe126 to Ile146, Phe164 to Leu184, Ile189 to Ile209, and Val261 to Trp281.

This sequence belongs to the CDP-alcohol phosphatidyltransferase class-I family. Requires Mn(2+) as cofactor.

The protein resides in the plastid. It is found in the chloroplast membrane. It localises to the mitochondrion membrane. The catalysed reaction is a CDP-1,2-diacyl-sn-glycerol + sn-glycerol 3-phosphate = a 1,2-diacyl-sn-glycero-3-phospho-(1'-sn-glycero-3'-phosphate) + CMP + H(+). The protein operates within phospholipid metabolism; phosphatidylglycerol biosynthesis; phosphatidylglycerol from CDP-diacylglycerol: step 1/2. In terms of biological role, catalyzes the committed step to the synthesis of the acidic phospholipids, including phosphatidylglycerol (PG). Transfers specifically a phosphatidyl group from CDP-diacylglycerol to glycerol-3-phosphate to form phosphatidylglycerophosphate. Cannot catalyze the phosphatidyl group transfer to inositol, serine, choline or phosphatidylglycerol. Possesses high activity with CDP-dipalmitoylglycerol and low activity with CDP-dioleoylglycerol. Essential for chloroplast differentiation and PG accumulation in thylakoids, an essential process for the assembly of antenna-reaction center complexes to optimize energy transfer from antenna pigments, and for subsequent photochemical efficiency of photosystem II (PSII). During cold acclimation (at 5 degrees Celsius), necessary for the photosystem I (PSI) photochemistry, including both reaction center and light-harvesting integrity. But dispensable in mitochondrion, being redundant with PGPS2 for the production of PG and its derivative cardiolipin (CL) in mitochondrial membranes. Together with PGPS2, required for the proper embryo development by providing PG accurate levels. This Arabidopsis thaliana (Mouse-ear cress) protein is CDP-diacylglycerol--glycerol-3-phosphate 3-phosphatidyltransferase 1, chloroplastic/mitochondrial.